We begin with the raw amino-acid sequence, 225 residues long: Putative adhesin RT0816 (225 aa).

Positions 1 to 22 (MKKLLLIAATSATILSSSISFA) are cleaved as a signal peptide.

This chain is Putative adhesin RT0816, found in Rickettsia typhi (strain ATCC VR-144 / Wilmington).